The sequence spans 426 residues: MTSNEELLQNYCSILFTYKTIGISNLHLYYFRETEIKSLRQLINAEFAILQTCNRVEIYLYSNTNTISEINKMIQYLNNVHNEPIGNQARVICGKDSIKHLFLVASGADSLSIGEYEILSQIRSTIDMFKKLGFSGKYLQILFERAIKVGRKVREETSISKGKVGIYSLAIDEAKRQFNNFYDRKIVIVGAGEMGQKIANMLYNEGVKNVTIMNRTVEKAKQLALKFGYNYEKLDLDKLGSFDIAFISISHENLRLENKWNTLIVDITVPPLFTGNNVITLEELEKISKLNFKAREEELVKINKLVEDGIDELIYDYKKEIYSEFMSKIMKRVETIRENEIVRAYKELEKLGINNQQVKEILDLMTRSIIKKSFQPLFDNVRSLVFDGENSINYINFLIDIFKDGNIPIFETKKIKKKQISKRSSS.

Substrate-binding positions include 52–55 (TCNR), Ser110, 115–117 (EYE), and Gln121. The active-site Nucleophile is Cys53. An NADP(+)-binding site is contributed by 190–195 (GAGEMG).

Belongs to the glutamyl-tRNA reductase family. As to quaternary structure, homodimer.

The enzyme catalyses (S)-4-amino-5-oxopentanoate + tRNA(Glu) + NADP(+) = L-glutamyl-tRNA(Glu) + NADPH + H(+). The protein operates within porphyrin-containing compound metabolism; protoporphyrin-IX biosynthesis; 5-aminolevulinate from L-glutamyl-tRNA(Glu): step 1/2. Its function is as follows. Catalyzes the NADPH-dependent reduction of glutamyl-tRNA(Glu) to glutamate 1-semialdehyde (GSA). The polypeptide is Glutamyl-tRNA reductase (Saccharolobus islandicus (strain Y.N.15.51 / Yellowstone #2) (Sulfolobus islandicus)).